Reading from the N-terminus, the 112-residue chain is uncharacterized protein (112 aa).

2 consecutive transmembrane segments (helical) span residues 44 to 63 (VITG…LHSL) and 68 to 90 (LAAL…KLVH).

The protein localises to the cell membrane. This is an uncharacterized protein from Archaeoglobus fulgidus (strain ATCC 49558 / DSM 4304 / JCM 9628 / NBRC 100126 / VC-16).